A 369-amino-acid polypeptide reads, in one-letter code: 4-hydroxy-3-methylbut-2-en-1-yl diphosphate synthase (flavodoxin) (369 aa).

Residues C270, C273, C305, and E312 each coordinate [4Fe-4S] cluster.

This sequence belongs to the IspG family. [4Fe-4S] cluster is required as a cofactor.

It catalyses the reaction (2E)-4-hydroxy-3-methylbut-2-enyl diphosphate + oxidized [flavodoxin] + H2O + 2 H(+) = 2-C-methyl-D-erythritol 2,4-cyclic diphosphate + reduced [flavodoxin]. The protein operates within isoprenoid biosynthesis; isopentenyl diphosphate biosynthesis via DXP pathway; isopentenyl diphosphate from 1-deoxy-D-xylulose 5-phosphate: step 5/6. Converts 2C-methyl-D-erythritol 2,4-cyclodiphosphate (ME-2,4cPP) into 1-hydroxy-2-methyl-2-(E)-butenyl 4-diphosphate. This is 4-hydroxy-3-methylbut-2-en-1-yl diphosphate synthase (flavodoxin) from Pseudomonas fluorescens (strain SBW25).